Consider the following 319-residue polypeptide: Ribosomal RNA small subunit methyltransferase H (319 aa).

Residues 39–41 (GGH), aspartate 59, phenylalanine 83, aspartate 104, and glutamine 111 contribute to the S-adenosyl-L-methionine site.

This sequence belongs to the methyltransferase superfamily. RsmH family.

The protein localises to the cytoplasm. It carries out the reaction cytidine(1402) in 16S rRNA + S-adenosyl-L-methionine = N(4)-methylcytidine(1402) in 16S rRNA + S-adenosyl-L-homocysteine + H(+). Its function is as follows. Specifically methylates the N4 position of cytidine in position 1402 (C1402) of 16S rRNA. This is Ribosomal RNA small subunit methyltransferase H from Ralstonia nicotianae (strain ATCC BAA-1114 / GMI1000) (Ralstonia solanacearum).